A 546-amino-acid chain; its full sequence is CTP synthase (546 aa).

The amidoligase domain stretch occupies residues 1-266 (MTTRYIFVTG…DQLVTKRFGI (266 aa)). Ser14 serves as a coordination point for CTP. Ser14 provides a ligand contact to UTP. ATP contacts are provided by residues 15 to 20 (SLGKGI) and Asp72. Residues Asp72 and Glu140 each contribute to the Mg(2+) site. Residues 147–149 (DIE), 187–192 (KTKPTQ), and Lys223 contribute to the CTP site. UTP is bound by residues 187-192 (KTKPTQ) and Lys223. 239–241 (KDV) lines the ATP pocket. The 252-residue stretch at 291–542 (TIGMVGKYIE…VAAAAAYQKR (252 aa)) folds into the Glutamine amidotransferase type-1 domain. Gly352 is a binding site for L-glutamine. The Nucleophile; for glutamine hydrolysis role is filled by Cys379. L-glutamine contacts are provided by residues 380 to 383 (LGMQ), Glu403, and Arg470. Residues His515 and Glu517 contribute to the active site.

The protein belongs to the CTP synthase family. As to quaternary structure, homotetramer.

It carries out the reaction UTP + L-glutamine + ATP + H2O = CTP + L-glutamate + ADP + phosphate + 2 H(+). It catalyses the reaction L-glutamine + H2O = L-glutamate + NH4(+). The enzyme catalyses UTP + NH4(+) + ATP = CTP + ADP + phosphate + 2 H(+). It functions in the pathway pyrimidine metabolism; CTP biosynthesis via de novo pathway; CTP from UDP: step 2/2. Its activity is regulated as follows. Allosterically activated by GTP, when glutamine is the substrate; GTP has no effect on the reaction when ammonia is the substrate. The allosteric effector GTP functions by stabilizing the protein conformation that binds the tetrahedral intermediate(s) formed during glutamine hydrolysis. Inhibited by the product CTP, via allosteric rather than competitive inhibition. Catalyzes the ATP-dependent amination of UTP to CTP with either L-glutamine or ammonia as the source of nitrogen. Regulates intracellular CTP levels through interactions with the four ribonucleotide triphosphates. This chain is CTP synthase, found in Shewanella pealeana (strain ATCC 700345 / ANG-SQ1).